A 134-amino-acid polypeptide reads, in one-letter code: MIIGIGSDLIDIRRVEKSIERFGDRFTHRCFTEIERARSDRRANRGASYAKRFAAKEACSKALGTGIAQGVFWKDMGVVNLPSGKPTMVLSGAAALILESMLPAGHRPAIHLTITDDYPLAQAFVIIEALPESL.

Aspartate 8 and glutamate 57 together coordinate Mg(2+).

This sequence belongs to the P-Pant transferase superfamily. AcpS family. Mg(2+) is required as a cofactor.

The protein localises to the cytoplasm. The enzyme catalyses apo-[ACP] + CoA = holo-[ACP] + adenosine 3',5'-bisphosphate + H(+). Functionally, transfers the 4'-phosphopantetheine moiety from coenzyme A to a Ser of acyl-carrier-protein. The sequence is that of Holo-[acyl-carrier-protein] synthase from Rhizobium leguminosarum bv. trifolii (strain WSM2304).